Consider the following 109-residue polypeptide: Transmembrane protein 233 (109 aa).

The interval 1–30 is disordered; it reads MSQYAPSPDFKRALDSSPEANTEDDKTEED. Residues 1-41 are Cytoplasmic-facing; the sequence is MSQYAPSPDFKRALDSSPEANTEDDKTEEDVPMPKNYLWLT. Residues 21–30 are compositionally biased toward acidic residues; that stretch reads NTEDDKTEED. Positions 42–62 form an intramembrane region, helical; that stretch reads IVSCFCPAYPINIVALVFSIM. The Cytoplasmic portion of the chain corresponds to 63-84; it reads SLNSYNDGDYEGARRLGRNAKW. The helical transmembrane segment at 85–105 threads the bilayer; sequence VAIASIIIGLLIIGISCAVHF. Residues 106–109 are Extracellular-facing; sequence TRNA.

Belongs to the CD225/Dispanin family. Interacts with the giant stinging tree toxin ExTxA (AC P0DQP3). Interacts with Nav1.7/SCN9A. Interacts with Nav1.1/SCN1A, Nav1.2/SCN2A, Nav1.3/SCN3A, Nav1.4/SCN4A, Nav1.5/SCN5A, and Nav1.6/SCN8A.

It is found in the cell membrane. In terms of biological role, probable accessory protein of voltage-gated sodium channels. The polypeptide is Transmembrane protein 233 (Homo sapiens (Human)).